The primary structure comprises 215 residues: Probable cutinase 3 (215 aa).

The first 17 residues, 1–17 (MHFRALLVSALATLAMA), serve as a signal peptide directing secretion. Disulfide bonds link Cys-39–Cys-118 and Cys-65–Cys-79. Catalysis depends on Ser-129, which acts as the Nucleophile. A disulfide bridge links Cys-180 with Cys-187. Asp-184 is an active-site residue. Catalysis depends on His-197, which acts as the Proton donor/acceptor.

This sequence belongs to the cutinase family.

The protein resides in the secreted. It catalyses the reaction cutin + H2O = cutin monomers.. Its function is as follows. Catalyzes the hydrolysis of complex carboxylic polyesters found in the cell wall of plants. Degrades cutin, a macromolecule that forms the structure of the plant cuticle. The polypeptide is Probable cutinase 3 (Aspergillus clavatus (strain ATCC 1007 / CBS 513.65 / DSM 816 / NCTC 3887 / NRRL 1 / QM 1276 / 107)).